A 1028-amino-acid chain; its full sequence is Endosome/lysosome-associated apoptosis and autophagy regulator family member 2 (1028 aa).

Positions 1-47 (MLLLTLRRAKGRDRGRPAGGPRRALSLPWSPAWICCWALAGCQAVWA) are cleaved as a signal peptide. The Extracellular segment spans residues 48-928 (GDSSSSGRPL…TCETVDFWLK (881 aa)). Asn-168 is a glycosylation site (N-linked (GlcNAc...) asparagine). Disulfide bonds link Cys-292–Cys-309, Cys-322–Cys-345, and Cys-325–Cys-357. Residues Asn-404 and Asn-690 are each glycosylated (N-linked (GlcNAc...) asparagine). The MRH domain occupies 671 to 876 (SDCFFYHEKE…LWESAEACPL (206 aa)). Disulfide bonds link Cys-673/Cys-719, Cys-729/Cys-757, Cys-826/Cys-862, and Cys-838/Cys-874. Residues 929–949 (VGAGVGAFTAVLLVALTCYFW) traverse the membrane as a helical segment. The Cytoplasmic segment spans residues 950 to 1028 (KKNQKLEYKY…QLKSSRCPNI (79 aa)). Position 1017 is a phosphoserine (Ser-1017).

The protein belongs to the ELAPOR family.

It localises to the cell membrane. Functionally, functions as a regulator of the BMP signaling pathway and may be involved in epidermal differentiation. This is Endosome/lysosome-associated apoptosis and autophagy regulator family member 2 from Mus musculus (Mouse).